Here is a 229-residue protein sequence, read N- to C-terminus: Nisin biosynthesis regulatory protein NisR (229 aa).

Positions 4 to 117 constitute a Response regulatory domain; the sequence is KILIVDDDQE…QLVAKVEANI (114 aa). 4-aspartylphosphate is present on aspartate 53. A DNA-binding region (ompR/PhoB-type) is located at residues 132-229; sequence EIRRDLGPIT…VRGLGYQWHG (98 aa).

Phosphorylated by NisK.

Functionally, member of the two-component regulatory system NisK/NisR involved in the regulation of the biosynthesis of lantibiotic nisin. NisR may function as a regulatory protein. The polypeptide is Nisin biosynthesis regulatory protein NisR (nisR) (Lactococcus lactis subsp. lactis (Streptococcus lactis)).